Here is a 308-residue protein sequence, read N- to C-terminus: Probable manganese-dependent inorganic pyrophosphatase (308 aa).

Mn(2+)-binding residues include His-9, Asp-13, Asp-15, Asp-75, His-97, and Asp-149.

This sequence belongs to the PPase class C family. Requires Mn(2+) as cofactor.

Its subcellular location is the cytoplasm. It carries out the reaction diphosphate + H2O = 2 phosphate + H(+). This chain is Probable manganese-dependent inorganic pyrophosphatase, found in Listeria monocytogenes serotype 4b (strain CLIP80459).